The chain runs to 495 residues: Serine/threonine-protein kinase F (495 aa).

The region spanning 46 to 314 is the Protein kinase domain; it reads YLPVKLLGQG…ASAEEVLAVL (269 aa). Residues 52–60 and lysine 77 each bind ATP; that span reads LGQGGFGAA. Aspartate 187 functions as the Proton acceptor in the catalytic mechanism. A disordered region spans residues 316-354; that stretch reads GGKGNQGKAPPGATVSTPQGTNTQIQPTPASSASPLTAP. Residues 329–350 are compositionally biased toward polar residues; sequence TVSTPQGTNTQIQPTPASSASP.

Belongs to the protein kinase superfamily. Ser/Thr protein kinase family.

The enzyme catalyses L-seryl-[protein] + ATP = O-phospho-L-seryl-[protein] + ADP + H(+). It carries out the reaction L-threonyl-[protein] + ATP = O-phospho-L-threonyl-[protein] + ADP + H(+). The polypeptide is Serine/threonine-protein kinase F (spkF) (Synechocystis sp. (strain ATCC 27184 / PCC 6803 / Kazusa)).